A 69-amino-acid chain; its full sequence is Putative membrane protein insertion efficiency factor (69 aa).

It belongs to the UPF0161 family.

Its subcellular location is the cell membrane. Its function is as follows. Could be involved in insertion of integral membrane proteins into the membrane. The chain is Putative membrane protein insertion efficiency factor from Desulfitobacterium hafniense (strain Y51).